The primary structure comprises 113 residues: Probable 4-amino-4-deoxy-L-arabinose-phosphoundecaprenol flippase subunit ArnE (113 aa).

Transmembrane regions (helical) follow at residues 39–59 (IFWLITAIAMLGFGMLFWLRL), 62–82 (ILPLSIAYPMLSINFIVVTLI), and 91–111 (VNVKHWVGIASIMLGIVLMSM). The region spanning 42-111 (LITAIAMLGF…IMLGIVLMSM (70 aa)) is the EamA domain.

The protein belongs to the ArnE family. As to quaternary structure, heterodimer of ArnE and ArnF.

Its subcellular location is the cell inner membrane. The protein operates within bacterial outer membrane biogenesis; lipopolysaccharide biosynthesis. Its function is as follows. Translocates 4-amino-4-deoxy-L-arabinose-phosphoundecaprenol (alpha-L-Ara4N-phosphoundecaprenol) from the cytoplasmic to the periplasmic side of the inner membrane. This Proteus mirabilis (strain HI4320) protein is Probable 4-amino-4-deoxy-L-arabinose-phosphoundecaprenol flippase subunit ArnE.